Here is an 814-residue protein sequence, read N- to C-terminus: G-type lectin S-receptor-like serine/threonine-protein kinase At1g61370 (814 aa).

The signal sequence occupies residues 1-25 (MGKIGIVFFASLLFLLIIFPSCAFA). In terms of domain architecture, Bulb-type lectin spans 26 to 145 (AITRASPLSI…VSERNLWESF (120 aa)). Residues 26-433 (AITRASPLSI…SELAGSNRVK (408 aa)) are Extracellular-facing. N-linked (GlcNAc...) asparagine glycans are attached at residues N43, N54, N89, N95, N253, and N271. The EGF-like domain occupies 282–318 (PVSSCDVYNTCGPFGLCIRSNPPKCECLKGFVPKSDE). Cystine bridges form between C286–C298 and C292–C306. Residues N324, N334, N340, and N383 are each glycosylated (N-linked (GlcNAc...) asparagine). Positions 337 to 423 (CDVNSSATAQ…GETLSIRLAS (87 aa)) constitute a PAN domain. Disulfide bonds link C376–C397 and C380–C386. A helical membrane pass occupies residues 434 to 454 (IIVASIVSISVFMILVFASYW). At 455–814 (YWRYKAKQND…NITQTAIVGR (360 aa)) the chain is on the cytoplasmic side. A Protein kinase domain is found at 501–786 (FSMENKLGQG…DLPKPKQPVF (286 aa)). Residues 507 to 515 (LGQGGFGPV) and K529 contribute to the ATP site. S535 and S550 each carry phosphoserine. Residues 590–607 (TKKLELDWPKRFEIIQGI) are caM-binding. The active-site Proton acceptor is the D626. 2 positions are modified to phosphoserine: S630 and S643. T660 is modified (phosphothreonine). Phosphoserine is present on residues S703, S704, S797, and S802. T809 carries the phosphothreonine modification.

Belongs to the protein kinase superfamily. Ser/Thr protein kinase family.

Its subcellular location is the cell membrane. The catalysed reaction is L-seryl-[protein] + ATP = O-phospho-L-seryl-[protein] + ADP + H(+). It catalyses the reaction L-threonyl-[protein] + ATP = O-phospho-L-threonyl-[protein] + ADP + H(+). The chain is G-type lectin S-receptor-like serine/threonine-protein kinase At1g61370 from Arabidopsis thaliana (Mouse-ear cress).